Reading from the N-terminus, the 459-residue chain is uncharacterized protein (459 aa).

Lys285 is subject to N6-(pyridoxal phosphate)lysine.

Belongs to the class-III pyridoxal-phosphate-dependent aminotransferase family.

It localises to the cytoplasm. This is an uncharacterized protein from Schizosaccharomyces pombe (strain 972 / ATCC 24843) (Fission yeast).